The following is a 198-amino-acid chain: Cytochrome c oxidase assembly protein CtaG (198 aa).

Over 1 to 12 the chain is Cytoplasmic; sequence MADNGQADRKER. The chain crosses the membrane as a helical; Signal-anchor for type II membrane protein span at residues 13–35; sequence SNGVIVGTCLAFVAGMIGMAYAA. Topologically, residues 36–198 are periplasmic; sequence VPLYDMFCRV…QVKAKAENKL (163 aa).

It belongs to the COX11/CtaG family.

It localises to the cell inner membrane. Functionally, exerts its effect at some terminal stage of cytochrome c oxidase synthesis, probably by being involved in the insertion of the copper B into subunit I. In Rhizobium meliloti (strain 1021) (Ensifer meliloti), this protein is Cytochrome c oxidase assembly protein CtaG.